Here is a 215-residue protein sequence, read N- to C-terminus: Probable Rab-related GTPase (215 aa).

GTP is bound at residue 20 to 27 (GSSGVGKS). Residues 42–50 (VSPTIGAAF) carry the Effector region motif. Residues 69–73 (DTAGQ) and 127–130 (NKID) each bind GTP. S-geranylgeranyl cysteine; by host attachment occurs at residues cysteine 211 and cysteine 212. Cysteine methyl ester; by host is present on cysteine 212. Positions 213-215 (YIS) are cleaved as a propeptide — removed in mature form.

Belongs to the small GTPase superfamily. Rab family.

It is found in the host cell membrane. Functionally, may be involved in protein transport. This is Probable Rab-related GTPase from Acanthamoeba polyphaga mimivirus (APMV).